The sequence spans 255 residues: 28.1 kDa virulence protein (255 aa).

It belongs to the SpvA family.

Functionally, not known. This protein is involved in the virulence of salmonellas. The chain is 28.1 kDa virulence protein (mkaB) from Salmonella typhimurium.